Reading from the N-terminus, the 334-residue chain is GTPase Obg (334 aa).

The 159-residue stretch at M1–M159 folds into the Obg domain. Residues A160–L332 enclose the OBG-type G domain. Residues G166–S173, F191–H195, D212–G215, N282–D285, and S313–L315 contribute to the GTP site. S173 and T193 together coordinate Mg(2+).

The protein belongs to the TRAFAC class OBG-HflX-like GTPase superfamily. OBG GTPase family. In terms of assembly, monomer. Mg(2+) serves as cofactor.

The protein localises to the cytoplasm. In terms of biological role, an essential GTPase which binds GTP, GDP and possibly (p)ppGpp with moderate affinity, with high nucleotide exchange rates and a fairly low GTP hydrolysis rate. Plays a role in control of the cell cycle, stress response, ribosome biogenesis and in those bacteria that undergo differentiation, in morphogenesis control. This Vesicomyosocius okutanii subsp. Calyptogena okutanii (strain HA) protein is GTPase Obg.